The primary structure comprises 306 residues: MKALRAVSLANTAVMLLAVLWGAWVTSSDSGDGCGASWPLCKGTFMPDWDYAAIVEFGHRVVSALAGLLSVAVLVWVARVRPSETRLKRLAFGTFFFVVLQGGLGAAAVLRPQPDLVMALHFGFSLLCFTFALLVTVALGQGERAAFQRPDVSAQPVAPGLRTQIWGLAVYTYLVVYLGAYVRHLGASMACTGWPLCNGELIPPLYGPVGANFAHRLGAALAVVLVLRLWWTARRLTERDDLRRGAAWALALMAAQVASGALFPLGYLNLLTQLLHTGLITGFWGVLSYLCYLTLPVGRETVAVSA.

Residues 1 to 5 (MKALR) lie on the Cytoplasmic side of the membrane. Residues 6 to 26 (AVSLANTAVMLLAVLWGAWVT) traverse the membrane as a helical segment. Residues 27–56 (SSDSGDGCGASWPLCKGTFMPDWDYAAIVE) are Extracellular-facing. Cys-34 and Cys-41 are oxidised to a cystine. Residue Glu-56 is part of the active site. Residues 57-77 (FGHRVVSALAGLLSVAVLVWV) form a helical membrane-spanning segment. His-59 serves as a coordination point for heme o. Residues 78-89 (ARVRPSETRLKR) are Cytoplasmic-facing. The chain crosses the membrane as a helical span at residues 90–110 (LAFGTFFFVVLQGGLGAAAVL). The Extracellular segment spans residues 111-116 (RPQPDL). A helical transmembrane segment spans residues 117-137 (VMALHFGFSLLCFTFALLVTV). His-121 contacts heme o. Over 138–164 (ALGQGERAAFQRPDVSAQPVAPGLRTQ) the chain is Cytoplasmic. Residues 165–185 (IWGLAVYTYLVVYLGAYVRHL) traverse the membrane as a helical segment. At 186-206 (GASMACTGWPLCNGELIPPLY) the chain is on the extracellular side. A disulfide bridge connects residues Cys-191 and Cys-197. A helical transmembrane segment spans residues 207-227 (GPVGANFAHRLGAALAVVLVL). Residue His-215 participates in heme b binding. Residues 228–247 (RLWWTARRLTERDDLRRGAA) are Cytoplasmic-facing. A helical transmembrane segment spans residues 248–268 (WALALMAAQVASGALFPLGYL). Residues 269–277 (NLLTQLLHT) are Extracellular-facing. Residue His-276 coordinates heme b. The chain crosses the membrane as a helical span at residues 278 to 298 (GLITGFWGVLSYLCYLTLPVG). Residues 299-306 (RETVAVSA) are Cytoplasmic-facing.

It belongs to the COX15/CtaA family. Type 1 subfamily. In terms of assembly, interacts with CtaB. Heme b serves as cofactor.

Its subcellular location is the cell membrane. It carries out the reaction Fe(II)-heme o + 2 A + H2O = Fe(II)-heme a + 2 AH2. Its pathway is porphyrin-containing compound metabolism; heme A biosynthesis; heme A from heme O: step 1/1. Functionally, catalyzes the conversion of heme O to heme A by two successive hydroxylations of the methyl group at C8. The first hydroxylation forms heme I, the second hydroxylation results in an unstable dihydroxymethyl group, which spontaneously dehydrates, resulting in the formyl group of heme A. The chain is Heme A synthase from Symbiobacterium thermophilum (strain DSM 24528 / JCM 14929 / IAM 14863 / T).